Reading from the N-terminus, the 438-residue chain is Adenylosuccinate synthetase (438 aa).

Residues 13–19 (GDEGKGK) and 41–43 (GHT) each bind GTP. The active-site Proton acceptor is D14. Residues D14 and G41 each contribute to the Mg(2+) site. Residues 14–17 (DEGK), 39–42 (NAGH), T136, R150, Q231, T246, and R310 contribute to the IMP site. The active-site Proton donor is H42. Substrate is bound at residue 306–312 (STTGRRR). GTP-binding positions include R312, 338–340 (KID), and 421–423 (STG).

It belongs to the adenylosuccinate synthetase family. Homodimer. Mg(2+) is required as a cofactor.

It is found in the cytoplasm. It catalyses the reaction IMP + L-aspartate + GTP = N(6)-(1,2-dicarboxyethyl)-AMP + GDP + phosphate + 2 H(+). The protein operates within purine metabolism; AMP biosynthesis via de novo pathway; AMP from IMP: step 1/2. Plays an important role in the de novo pathway of purine nucleotide biosynthesis. Catalyzes the first committed step in the biosynthesis of AMP from IMP. In Blochmanniella floridana, this protein is Adenylosuccinate synthetase.